A 534-amino-acid polypeptide reads, in one-letter code: Ankyrin repeat domain-containing protein 34C (534 aa).

ANK repeat units follow at residues T10–E39, K43–I80, S84–L114, and T118–K147. Residues S159–K205 form a disordered region. At S301 the chain carries Phosphoserine. Disordered stretches follow at residues Y332 to P368 and Q384 to D403. S446 is modified (phosphoserine). The disordered stretch occupies residues S480 to R503.

This sequence belongs to the ANKRD34 family.

The sequence is that of Ankyrin repeat domain-containing protein 34C (Ankrd34c) from Mus musculus (Mouse).